Here is an 83-residue protein sequence, read N- to C-terminus: Molybdopterin synthase sulfur carrier subunit (83 aa).

This sequence belongs to the MoaD family.

It functions in the pathway cofactor biosynthesis; molybdopterin biosynthesis. Functionally, involved in sulfur transfer in the conversion of molybdopterin precursor Z to molybdopterin. Probably plays a role in host phagosome maturation arrest. The chain is Molybdopterin synthase sulfur carrier subunit (moaD1) from Mycobacterium tuberculosis (strain ATCC 25618 / H37Rv).